We begin with the raw amino-acid sequence, 308 residues long: tRNA uridine(34) hydroxylase (308 aa).

The 95-residue stretch at 128–222 (ADENTVVVDT…YLEEVPREQS (95 aa)) folds into the Rhodanese domain. Cysteine 182 serves as the catalytic Cysteine persulfide intermediate.

The protein belongs to the TrhO family.

It carries out the reaction uridine(34) in tRNA + AH2 + O2 = 5-hydroxyuridine(34) in tRNA + A + H2O. Its function is as follows. Catalyzes oxygen-dependent 5-hydroxyuridine (ho5U) modification at position 34 in tRNAs. The polypeptide is tRNA uridine(34) hydroxylase (Brucella suis biovar 1 (strain 1330)).